We begin with the raw amino-acid sequence, 605 residues long: Alpha-1,3-galactosidase B (605 aa).

Positions 1–19 are cleaved as a signal peptide; sequence MKRIIFNFCFVWLAVSAFA. PbH1 repeat units lie at residues 428-450, 451-473, and 484-538; these read CPEV…LFST, PLKT…LLCG, and CRNV…VIED.

This sequence belongs to the glycosyl hydrolase 110 family. B subfamily.

It carries out the reaction Hydrolysis of terminal, non-reducing branched (1-&gt;3)-alpha-D-galactosidic residues, producing free D-galactose.. The catalysed reaction is Hydrolysis of terminal, non-reducing linear (1-&gt;3)-alpha-D-galactosidic residues, producing free D-galactose.. It catalyses the reaction Hydrolysis of terminal, non-reducing alpha-D-galactose residues in alpha-D-galactosides, including galactose oligosaccharides, galactomannans and galactolipids.. In terms of biological role, alpha-galactosidase. Removes both branched alpha-1,3-linked galactose residues of blood group B antigens and linear alpha-1,3-linked galactose structures. This is Alpha-1,3-galactosidase B (glaB2) from Phocaeicola vulgatus (strain ATCC 8482 / DSM 1447 / JCM 5826 / CCUG 4940 / NBRC 14291 / NCTC 11154) (Bacteroides vulgatus).